Reading from the N-terminus, the 137-residue chain is Endoribonuclease YbeY (137 aa).

Zn(2+) is bound by residues His105, His109, and Asp115.

This sequence belongs to the endoribonuclease YbeY family. The cofactor is Zn(2+).

The protein resides in the cytoplasm. In terms of biological role, single strand-specific metallo-endoribonuclease involved in late-stage 70S ribosome quality control and in maturation of the 3' terminus of the 16S rRNA. This chain is Endoribonuclease YbeY, found in Chlorobium luteolum (strain DSM 273 / BCRC 81028 / 2530) (Pelodictyon luteolum).